Consider the following 152-residue polypeptide: Large ribosomal subunit protein bL9 (152 aa).

This sequence belongs to the bacterial ribosomal protein bL9 family.

Functionally, binds to the 23S rRNA. The polypeptide is Large ribosomal subunit protein bL9 (Nostoc punctiforme (strain ATCC 29133 / PCC 73102)).